Reading from the N-terminus, the 871-residue chain is Translation initiation factor IF-2 (871 aa).

A disordered region spans residues 1-242; sequence MVDTKNPGDK…PAAKPAPAKQ (242 aa). Residues 68–91 are compositionally biased toward low complexity; the sequence is PASARTPAAKAPPARAATPAAPRA. Positions 115–174 are enriched in basic and acidic residues; sequence AKVRAEEERRIAEAEAARRNSKEGIEQAEREAAEARRKAEEERHRQEEEAKRKAEIEAKR. 2 stretches are compositionally biased toward low complexity: residues 182–206 and 225–241; these read KPAPAKTTTTTTRAAPPARPAAVAA and ARPVIAPKPAAKPAPAK. Residues 367–538 enclose the tr-type G domain; sequence PRSPVVTVMG…SLQADLLDLK (172 aa). The G1 stretch occupies residues 376–383; it reads GHVDHGKT. Residue 376-383 participates in GTP binding; that stretch reads GHVDHGKT. Residues 401-405 form a G2 region; it reads GITQH. The G3 stretch occupies residues 424–427; that stretch reads DTPG. GTP-binding positions include 424–428 and 478–481; these read DTPGH and NKID. The interval 478–481 is G4; that stretch reads NKID. A G5 region spans residues 514-516; sequence SAK.

It belongs to the TRAFAC class translation factor GTPase superfamily. Classic translation factor GTPase family. IF-2 subfamily.

The protein localises to the cytoplasm. Its function is as follows. One of the essential components for the initiation of protein synthesis. Protects formylmethionyl-tRNA from spontaneous hydrolysis and promotes its binding to the 30S ribosomal subunits. Also involved in the hydrolysis of GTP during the formation of the 70S ribosomal complex. This chain is Translation initiation factor IF-2, found in Nitrobacter winogradskyi (strain ATCC 25391 / DSM 10237 / CIP 104748 / NCIMB 11846 / Nb-255).